The chain runs to 382 residues: MSTYSRPVLLLLCGLLLLTLAIAVLNTLVPLWLAHENLPTWQVGMVSSSYFTGNLLGTLLTGKLIKRFGFNRSYYLASLIFAAGCVGLGLMVGFWSWMTWRFIAGVGCAMIWVVVESALMCSGTSRNRGRLLAAYMMVYYVGTVLGQLMISKLPTDLMSVLPWVTGMVLAAILPLLFTRIVNQGSEHHEATQVWPMLRLRHARLGVNGCIISGIVLGSLYGLMPLYLNHQGVSDSGIGFWMAVMVSAGIVGQWPIGKLADRYGRLLVLRVQVFVVILGCLAMLGNAAMAPALFILGAAGFTLYPVAMAWACEKVENHQLVAMNQALLLSYTIGSLLGPTFTAMLMQNYSDNLLFIMIASVAFIYLLMLLRKAGEHPTPVAHA.

12 helical membrane passes run 8 to 28 (VLLL…LNTL), 39 to 61 (PTWQ…TLLT), 75 to 95 (YLAS…VGFW), 102 to 122 (FIAG…LMCS), 131 to 151 (LLAA…LMIS), 157 to 177 (LMSV…PLLF), 204 to 224 (LGVN…GLMP), 236 to 256 (GIGF…WPIG), 265 to 284 (LLVL…AMLG), 289 to 311 (APAL…AWAC), 325 to 345 (ALLL…AMLM), and 349 to 369 (SDNL…LMLL).

Belongs to the major facilitator superfamily. YcaD (TC 2.A.1.26) family.

The protein resides in the cell inner membrane. This is an uncharacterized protein from Enterobacter sp. (strain 638).